A 114-amino-acid polypeptide reads, in one-letter code: Early 4 ORF4 protein (114 aa).

Positions Arg66–Arg75 match the Nuclear localization signal motif.

The protein belongs to the adenoviridae E4 ORF4 family. As to quaternary structure, interacts with host BAZ1A/ACF1, host PPP2R2A/PP2a-B55alpha subunit, and host PPP2R5E/PP2a-B'B56 subunit. May interact with host SRC. Post-translationally, may be phosphorylated by host SRC kinase.

Its subcellular location is the host nucleus. The protein localises to the host cytoplasm. In terms of biological role, plays a role in viral alternative pre-mRNA splicing. Activates dephosphorylation by protein phosphatase 2A of host SR proteins and converts their splicing properties. When expressed alone ex vivo, induces p53/TP53-independent apoptosis called cytoplasmic death. May mimic nutrient/growth signals to activate the host mTOR pathway. This chain is Early 4 ORF4 protein, found in Homo sapiens (Human).